Consider the following 380-residue polypeptide: Probable tRNA-splicing endonuclease subunit sen2 (380 aa).

Residues Tyr-281, His-289, and Lys-325 contribute to the active site.

Belongs to the tRNA-intron endonuclease family. As to quaternary structure, heterotetramer composed of sen2, sen15, sen34 and sen54. Interacts directly with sen54.

It catalyses the reaction pretRNA = a 3'-half-tRNA molecule with a 5'-OH end + a 5'-half-tRNA molecule with a 2',3'-cyclic phosphate end + an intron with a 2',3'-cyclic phosphate and a 5'-hydroxyl terminus.. In terms of biological role, constitutes one of the two catalytic subunit of the tRNA-splicing endonuclease complex, a complex responsible for identification and cleavage of the splice sites in pre-tRNA. It cleaves pre-tRNA at the 5'- and 3'-splice sites to release the intron. The products are an intron and two tRNA half-molecules bearing 2',3'-cyclic phosphate and 5'-OH termini. There are no conserved sequences at the splice sites, but the intron is invariably located at the same site in the gene, placing the splice sites an invariant distance from the constant structural features of the tRNA body. This subunit may anchor the endonuclease complex to the nuclear membrane. Probably carries the active site for 5'-splice site cleavage. This chain is Probable tRNA-splicing endonuclease subunit sen2 (sen2), found in Schizosaccharomyces pombe (strain 972 / ATCC 24843) (Fission yeast).